Here is a 265-residue protein sequence, read N- to C-terminus: Acetylglutamate kinase (265 aa).

Substrate is bound by residues 41–42 (GG), R63, and N156.

This sequence belongs to the acetylglutamate kinase family. ArgB subfamily.

It localises to the cytoplasm. It carries out the reaction N-acetyl-L-glutamate + ATP = N-acetyl-L-glutamyl 5-phosphate + ADP. Its pathway is amino-acid biosynthesis; L-arginine biosynthesis; N(2)-acetyl-L-ornithine from L-glutamate: step 2/4. Catalyzes the ATP-dependent phosphorylation of N-acetyl-L-glutamate. This Brevibacillus brevis (strain 47 / JCM 6285 / NBRC 100599) protein is Acetylglutamate kinase.